Here is a 162-residue protein sequence, read N- to C-terminus: Interleukin-15 (162 aa).

Positions methionine 1–alanine 29 are cleaved as a signal peptide. Positions glycine 30 to alanine 48 are excised as a propeptide. Intrachain disulfides connect cysteine 83/cysteine 133 and cysteine 90/cysteine 136. N-linked (GlcNAc...) asparagine glycans are attached at residues asparagine 119, asparagine 127, and asparagine 143.

The protein belongs to the IL-15/IL-21 family.

It localises to the secreted. Functionally, cytokine that plays a major role in the development of inflammatory and protective immune responses to microbial invaders and parasites by modulating immune cells of both the innate and adaptive immune systems. Stimulates the proliferation of natural killer cells, T-cells and B-cells and promotes the secretion of several cytokines. In monocytes, induces the production of IL8 and monocyte chemotactic protein 1/CCL2, two chemokines that attract neutrophils and monocytes respectively to sites of infection. Unlike most cytokines, which are secreted in soluble form, IL15 is expressed in association with its high affinity IL15RA on the surface of IL15-producing cells and delivers signals to target cells that express IL2RB and IL2RG receptor subunits. Binding to its receptor triggers the phosphorylation of JAK1 and JAK3 and the recruitment and subsequent phosphorylation of signal transducer and activator of transcription-3/STAT3 and STAT5. In mast cells, induces the rapid tyrosine phosphorylation of STAT6 and thereby controls mast cell survival and release of cytokines such as IL4. The sequence is that of Interleukin-15 (IL15) from Marmota monax (Woodchuck).